A 165-amino-acid chain; its full sequence is Adenosine 5'-monophosphoramidase HINT3 (165 aa).

Residues 1–23 (MAEKQAGLVGEPDPEGSSPGTSE) form a disordered region. Residue A2 is modified to N-acetylalanine. The HIT domain occupies 32–143 (VFCRVAAGQE…PVKEFGFLSK (112 aa)). AMP-binding positions include 59 to 60 (DI) and 128 to 130 (HLH). Positions 126-130 (HLHLH) match the Histidine triad motif motif. Catalysis depends on H128, which acts as the Tele-AMP-histidine intermediate.

This sequence belongs to the HINT family. As to quaternary structure, forms dimers to octamers and even larger oligomer. Interacts with CALM1.

It localises to the cytoplasm. The protein localises to the nucleus. The enzyme catalyses adenosine 5'-phosphoramidate + H2O = AMP + NH4(+). In terms of biological role, exhibits adenosine 5'-monophosphoramidase activity, hydrolyzing purine nucleotide phosphoramidates with a single phosphate group such as adenosine 5'monophosphoramidate (AMP-NH2) to yield AMP and NH2. Hydrolyzes lysyl-AMP (AMP-N-epsilon-(N-alpha-acetyl lysine methyl ester)) generated by lysine tRNA ligase. This Mus musculus (Mouse) protein is Adenosine 5'-monophosphoramidase HINT3 (Hint3).